Consider the following 485-residue polypeptide: Membrane-bound lytic murein transglycosylase F (485 aa).

The first 29 residues, 1 to 29, serve as a signal peptide directing secretion; that stretch reads MFAHTALRQRCAKWLLATGLFLLLGACVE. A non-LT domain region spans residues 30–267; that stretch reads KPSTLERVKE…RLKDRYYGHV (238 aa). Residues 268–485 form an LT domain region; it reads DVLGYVGAYT…DKPADKSSPM (218 aa). Glu-314 is an active-site residue. Residues 465–485 form a disordered region; it reads EGNLHVPGVNKDKPADKSSPM. The span at 474–485 shows a compositional bias: basic and acidic residues; the sequence is NKDKPADKSSPM.

It in the N-terminal section; belongs to the bacterial solute-binding protein 3 family. This sequence in the C-terminal section; belongs to the transglycosylase Slt family.

The protein localises to the cell outer membrane. It catalyses the reaction Exolytic cleavage of the (1-&gt;4)-beta-glycosidic linkage between N-acetylmuramic acid (MurNAc) and N-acetylglucosamine (GlcNAc) residues in peptidoglycan, from either the reducing or the non-reducing ends of the peptidoglycan chains, with concomitant formation of a 1,6-anhydrobond in the MurNAc residue.. In terms of biological role, murein-degrading enzyme that degrades murein glycan strands and insoluble, high-molecular weight murein sacculi, with the concomitant formation of a 1,6-anhydromuramoyl product. Lytic transglycosylases (LTs) play an integral role in the metabolism of the peptidoglycan (PG) sacculus. Their lytic action creates space within the PG sacculus to allow for its expansion as well as for the insertion of various structures such as secretion systems and flagella. This chain is Membrane-bound lytic murein transglycosylase F, found in Pseudomonas putida (strain ATCC 47054 / DSM 6125 / CFBP 8728 / NCIMB 11950 / KT2440).